A 410-amino-acid polypeptide reads, in one-letter code: Phosphoglycerate kinase (410 aa).

Substrate is bound by residues 24 to 26 (DLN), Arg-40, 63 to 66 (HLGR), Arg-122, and Arg-162. ATP is bound by residues Lys-212, Gly-300, Glu-331, and 360 to 363 (GGDS).

It belongs to the phosphoglycerate kinase family. Monomer.

The protein localises to the cytoplasm. It carries out the reaction (2R)-3-phosphoglycerate + ATP = (2R)-3-phospho-glyceroyl phosphate + ADP. Its pathway is carbohydrate degradation; glycolysis; pyruvate from D-glyceraldehyde 3-phosphate: step 2/5. The polypeptide is Phosphoglycerate kinase (Nocardia farcinica (strain IFM 10152)).